A 265-amino-acid polypeptide reads, in one-letter code: tRNA (guanine-N(1)-)-methyltransferase (265 aa).

S-adenosyl-L-methionine contacts are provided by residues Gly-119 and 139 to 144 (VGDYIL).

The protein belongs to the RNA methyltransferase TrmD family. Homodimer.

Its subcellular location is the cytoplasm. It carries out the reaction guanosine(37) in tRNA + S-adenosyl-L-methionine = N(1)-methylguanosine(37) in tRNA + S-adenosyl-L-homocysteine + H(+). Specifically methylates guanosine-37 in various tRNAs. This Pseudoalteromonas atlantica (strain T6c / ATCC BAA-1087) protein is tRNA (guanine-N(1)-)-methyltransferase.